Reading from the N-terminus, the 219-residue chain is Envelope protein UL45 homolog (219 aa).

Over 1–57 (MEDYKLLQLETATVDAQAPPLPTKTVPVFAPPLSTPPQPNELVYTKRRRTKRKAKCR) the chain is Intravirion. The chain crosses the membrane as a helical; Signal-anchor for type II membrane protein span at residues 58–78 (CLFFTMGMFALGVLMTTAILV). At 79–219 (STFILTVPIG…RLDHIIPFPR (141 aa)) the chain is on the virion surface side. N-linked (GlcNAc...) asparagine; by host glycosylation is found at Asn-113, Asn-120, and Asn-138.

Belongs to the herpesviridae HHV-1 UL45 family. In terms of processing, N-glycosylated.

The protein localises to the virion membrane. The protein is Envelope protein UL45 homolog of Equine herpesvirus 1 (strain Ab4p) (EHV-1).